A 120-amino-acid chain; its full sequence is cAMP-responsive element-binding protein-like 2 (120 aa).

Positions 1-24 (MDDSKVVGGKVKKPGKRGRKPAKI) are disordered. Residues 10-21 (KVKKPGKRGRKP) show a composition bias toward basic residues. Residues 23–86 (KIDLKAKLER…MAMDQGKIPS (64 aa)) enclose the bZIP domain. Residues 29-60 (KLERSRQSARECRARKKLRYQYLEELVSSRER) are basic motif. Positions 62 to 69 (ICALREEL) are leucine-zipper. A disordered region spans residues 93–120 (TGEEQSKSQQNSSRHMKAGKTDANSNSW).

The protein belongs to the bZIP family. ATF subfamily. As to quaternary structure, interacts with CREB1; regulates CREB1 phosphorylation, stability and transcriptional activity. Interacts with immediate-early (IE) protein BICP22 of bovine herpesvirus-1 (BHV-1). Phosphorylated by AMPK.

It is found in the nucleus. Its function is as follows. Probable regulator of CREB1 transcriptional activity which is involved in adipose cells differentiation. May also play a regulatory role in the cell cycle. The protein is cAMP-responsive element-binding protein-like 2 (CREBL2) of Bos taurus (Bovine).